The chain runs to 874 residues: MLKKFDKKDEESGGGSNPLQHLEKSAVLQEARVFNETPINPRKCAHILTKILYLINQGEHLGTTEATEAFFAMTKLFQSNDPTLRRMCYLTIKEMSCIAEDVIIVTSSLTKDMTGKEDNYRGPAVRALCQITDSTMLQAVERYMKQAIVDKVPSVSSSALVSSLHLLKCSFDVVKRWVNEAQEAASSDNIMVQYHALGLLYHVRKNDRLAVSKMISKFTRHGLKSPFAYCMMIRVASKQLEEEDGSRDSPLFDFIESCLRNKHEMVVYEAASAIVNLPGCSAKELAPAVSVLQLFCSSPKAALRYAAVRTLNKVAMKHPSAVTACNLDLENLVTDSNRSIATLAITTLLKTGSESSIDRLMKQISSFMSEISDEFKVVVVQAISALCQKYPRKHAVLMNFLFTMLREEGGFEYKRAIVDCIISIIEENSESKETGLSHLCEFIEDCEFTVLATRILHLLGQEGPKTNNPSKYIRFIYNRVVLEHEEVRAGAVSALAKFGAQNEEMLPSILVLLKRCVMDDDNEVRDRATFYLNVLEQKQKALNAGYILNGLTVSIPGLEKALQQYTLEPSEKPFDLKSVPLATTPMAEQRPESTATAAVKQPEKVAATRQEIFQEQLAAVPEFQGLGPLFKSSPEPVALTESETEYVIRCTKHTFSDHLVFQFDCTNTLNDQTLENVTVQMEPTEAYEVLSYVPARSLPYNQPGTCYTLVALPTEDPTAVACTFSCVMKFTVKDCDPNTGEIDEEGYEDEYVLEDLEVTVADHIQKVMKVNFEAAWDEVGDEFEKEETFTLSTIKTLEEAVGNIVKFLGMHPCERSDKVPENKNTHTLLLAGVFRGGHDILVRSRLLLLDTVTMQVTARSSEELPVDIILASVG.

Positions 1–11 (MLKKFDKKDEE) are enriched in basic and acidic residues. Residues 1 to 21 (MLKKFDKKDEESGGGSNPLQH) form a disordered region. 4 HEAT repeats span residues 64–101 (TEAT…IAED), 283–320 (KELA…KHPS), 322–355 (VTAC…GSES), and 356–392 (SIDR…KYPR). Residue Thr-594 is modified to Phosphothreonine. The interaction with ZNF289/ARFGAP2 stretch occupies residues 609-874 (RQEIFQEQLA…PVDIILASVG (266 aa)).

Belongs to the COPG family. Oligomeric complex that consists of at least the alpha, beta, beta', gamma, delta, epsilon and zeta subunits. Interacts with ZNF289/ARFGAP2 through its C-terminal appendage domain. Interacts with EGFR upon EGF treatment; interaction is essential for regulation of EGF-dependent nuclear transport of EGFR by retrograde trafficking from the Golgi to the ER. The coatomer interacts with KDEL receptors; the interaction is important for retrograde trafficking of KDEL-bearing proteins from the Golgi to the endoplasmic reticulum. Interacts with COPB1. Interacts with TMED10 (via C-terminus). Interacts with TMED2, TMED3, TMED7 and TMED9.

The protein localises to the cytoplasm. The protein resides in the cytosol. Its subcellular location is the golgi apparatus membrane. It localises to the cytoplasmic vesicle. It is found in the COPI-coated vesicle membrane. The coatomer is a cytosolic protein complex that binds to dilysine motifs and reversibly associates with Golgi non-clathrin-coated vesicles, which further mediate biosynthetic protein transport from the ER, via the Golgi up to the trans Golgi network. Coatomer complex is required for budding from Golgi membranes, and is essential for the retrograde Golgi-to-ER transport of dilysine-tagged proteins. In mammals, the coatomer can only be recruited by membranes associated to ADP-ribosylation factors (ARFs), which are small GTP-binding proteins; the complex also influences the Golgi structural integrity, as well as the processing, activity, and endocytic recycling of LDL receptors. Required for limiting lipid storage in lipid droplets. Involved in lipid homeostasis by regulating the presence of perilipin family members PLIN2 and PLIN3 at the lipid droplet surface and promoting the association of adipocyte triglyceride lipase (PNPLA2) with the lipid droplet surface to mediate lipolysis. This is Coatomer subunit gamma-1 (Copg1) from Mus musculus (Mouse).